The primary structure comprises 229 residues: Heptaprenylglyceryl phosphate synthase (229 aa).

Lys12 provides a ligand contact to sn-glycerol 1-phosphate. Positions 14 and 40 each coordinate Mg(2+). Residues 159 to 164 (YLEYSG), Gly189, and 209 to 210 (GN) contribute to the sn-glycerol 1-phosphate site.

The protein belongs to the GGGP/HepGP synthase family. Group I subfamily. Homodimer. Mg(2+) serves as cofactor.

The catalysed reaction is sn-glycerol 1-phosphate + all-trans-heptaprenyl diphosphate = 3-heptaprenyl-sn-glycero-1-phosphate + diphosphate. Its pathway is membrane lipid metabolism; glycerophospholipid metabolism. Its function is as follows. Prenyltransferase that catalyzes in vivo the transfer of the heptaprenyl moiety of heptaprenyl pyrophosphate (HepPP; 35 carbon atoms) to the C3 hydroxyl of sn-glycerol-1-phosphate (G1P), producing heptaprenylglyceryl phosphate (HepGP). This reaction is an ether-bond-formation step in the biosynthesis of archaea-type G1P-based membrane lipids found in Bacillales. This Bacillus thuringiensis (strain Al Hakam) protein is Heptaprenylglyceryl phosphate synthase.